A 319-amino-acid chain; its full sequence is L-threo-3-hydroxyaspartate ammonia-lyase (319 aa).

An N6-(pyridoxal phosphate)lysine modification is found at Lys53. Pyridoxal 5'-phosphate-binding positions include Asn80, 179 to 183 (GGGGM), and Thr304.

Belongs to the serine/threonine dehydratase family. May be either a monomer or a homodimer. Pyridoxal 5'-phosphate serves as cofactor. The cofactor is Mn(2+). Mg(2+) is required as a cofactor. It depends on Ca(2+) as a cofactor.

It carries out the reaction (3S)-3-hydroxy-L-aspartate = oxaloacetate + NH4(+). With respect to regulation, is strongly inhibited by hydroxylamine and EDTA in vitro. Functionally, catalyzes the deamination of L-threo-3-hydroxyaspartate to oxaloacetate and ammonia. Shows a high specificity towards L-threo-3-hydroxyaspartate as other 3-hydroxyaminoacids, i.e. D,L-erythro- and D-threo-3-hydroxyaspartate, D-threonine, L-threonine, D,L-allothreonine, D,L-threo-3-phenylserine, D-serine, and L-serine, are not substrates for this enzyme. Exhibits no detectable serine and aspartate racemase activity. Might play a role in the detoxification of naturally occurring 3-hydroxyaspartate in Pseudomonas sp. T62 cells. The protein is L-threo-3-hydroxyaspartate ammonia-lyase of Pseudomonas sp.